Consider the following 66-residue polypeptide: Disk-determining factor A (66 aa).

Its function is as follows. Involved in cell-shape determination. Required for the formation of disks. This chain is Disk-determining factor A, found in Haloferax volcanii (strain ATCC 29605 / DSM 3757 / JCM 8879 / NBRC 14742 / NCIMB 2012 / VKM B-1768 / DS2) (Halobacterium volcanii).